A 543-amino-acid polypeptide reads, in one-letter code: Probable zinc transporter protein DDB_G0283629 (543 aa).

The disordered stretch occupies residues 1 to 175 (MENFKNNELE…EESKPLNQLR (175 aa)). The Cytoplasmic segment spans residues 1-186 (MENFKNNELE…LDSKKKARYS (186 aa)). Composition is skewed to low complexity over residues 11-26 (SSPIINKNNSSHSINN) and 41-55 (NNNNDNNNTITNSHI). Composition is skewed to basic and acidic residues over residues 56-66 (NNHDHKHNHEH) and 76-104 (HNHDHDHNHEEEYGHGNELEHNNDQEHNV). The span at 105–116 (GNKNLLTNNNNQ) shows a compositional bias: low complexity. The segment covering 130-140 (EDGSSSGGGGG) has biased composition (gly residues). A helical membrane pass occupies residues 187-207 (LILALTLTTIFMVGEIVGGYF). Residues 208 to 216 (ANSLAIMTD) are Extracellular-facing. The chain crosses the membrane as a helical span at residues 217-237 (AAHLLTDIGAMFLSLFAMWIS). Topologically, residues 238 to 251 (QHPPTSSMSFGFHR) are cytoplasmic. The chain crosses the membrane as a helical span at residues 252–272 (AEILGALVSVLMIWALTGVLV). Topologically, residues 273 to 289 (YEAIQRILYPPDAVDGK) are extracellular. Residues 290–310 (IMFIIASCGLFINIIDAIILH) form a helical membrane-spanning segment. Residues 311–375 (WGSGGHGHSH…VRNINVHSAY (65 aa)) lie on the Cytoplasmic side of the membrane. The interval 319–342 (SHGGGHGHSHGIGGGTQKKKSKKN) is disordered. The helical transmembrane segment at 376 to 396 (IHVLGDCFQSIGVMVASCIIW) threads the bilayer. At 397–402 (VHPHWK) the chain is on the extracellular side. Residues 403-423 (IADPITTLIFSVIVLGTTIKL) traverse the membrane as a helical segment. Residues 424 to 543 (LRESLGVLME…NDNLSSPPNQ (120 aa)) lie on the Cytoplasmic side of the membrane. The segment at 516–543 (KCKDHSCPPPKPKKKKIKNDNLSSPPNQ) is disordered.

Belongs to the cation diffusion facilitator (CDF) transporter (TC 2.A.4) family. SLC30A subfamily.

Its subcellular location is the membrane. Its function is as follows. May be involved in zinc transport from the cytoplasm to either intracellular organelles or extracellular spaces. This chain is Probable zinc transporter protein DDB_G0283629, found in Dictyostelium discoideum (Social amoeba).